The chain runs to 667 residues: DNA ligase (667 aa).

NAD(+)-binding positions include 32 to 36, 81 to 82, and E111; these read DSVYD and SL. Residue K113 is the N6-AMP-lysine intermediate of the active site. Residues R134, E168, K285, and K309 each contribute to the NAD(+) site. 4 residues coordinate Zn(2+): C403, C406, C421, and C426. A BRCT domain is found at 588-667; that stretch reads VGDNPFAGKT…DNLIEQLNLI (80 aa).

It belongs to the NAD-dependent DNA ligase family. LigA subfamily. Mg(2+) is required as a cofactor. Mn(2+) serves as cofactor.

The enzyme catalyses NAD(+) + (deoxyribonucleotide)n-3'-hydroxyl + 5'-phospho-(deoxyribonucleotide)m = (deoxyribonucleotide)n+m + AMP + beta-nicotinamide D-nucleotide.. DNA ligase that catalyzes the formation of phosphodiester linkages between 5'-phosphoryl and 3'-hydroxyl groups in double-stranded DNA using NAD as a coenzyme and as the energy source for the reaction. It is essential for DNA replication and repair of damaged DNA. In Lysinibacillus sphaericus (strain C3-41), this protein is DNA ligase.